Consider the following 101-residue polypeptide: Protein Tat (101 aa).

Over residues 1–12 (MEPVDPRLEPWK) the composition is skewed to basic and acidic residues. The disordered stretch occupies residues 1-24 (MEPVDPRLEPWKHPGSQPKTASNN). Positions 1 to 24 (MEPVDPRLEPWKHPGSQPKTASNN) are interaction with human CREBBP. Residues 1–48 (MEPVDPRLEPWKHPGSQPKTASNNCYCKRCCLHCQVCFTKKGLGISYG) form a transactivation region. A cysteine-rich region spans residues 22–37 (SNNCYCKRCCLHCQVC). Zn(2+)-binding residues include C25 and C27. K28 bears the N6-acetyllysine; by host PCAF mark. The Zn(2+) site is built by C30, H33, C34, and C37. A core region spans residues 38–48 (FTKKGLGISYG). The tract at residues 45-101 (ISYGRKKRRQRRRAPQDSKTHQVSLSKQPASQPRGDPTGPKESKKKVERETETDPED) is disordered. The segment covering 48–57 (GRKKRRQRRR) has biased composition (basic residues). A Nuclear localization signal, RNA-binding (TAR), and protein transduction motif is present at residues 49-57 (RKKRRQRRR). Residues 49–86 (RKKRRQRRRAPQDSKTHQVSLSKQPASQPRGDPTGPKE) form an interaction with the host capping enzyme RNGTT region. N6-acetyllysine; by host EP300 and GCN5L2 is present on residues K50 and K51. R52 and R53 each carry asymmetric dimethylarginine; by host PRMT6. Polar residues predominate over residues 65–75 (HQVSLSKQPAS). Residue K71 forms a Glycyl lysine isopeptide (Lys-Gly) (interchain with G-Cter in ubiquitin) linkage. Positions 78 to 80 (RGD) match the Cell attachment site motif. Positions 83 to 101 (GPKESKKKVERETETDPED) are enriched in basic and acidic residues.

The protein belongs to the lentiviruses Tat family. In terms of assembly, interacts with host CCNT1. Associates with the P-TEFb complex composed at least of Tat, P-TEFb (CDK9 and CCNT1), TAR RNA, RNA Pol II. Recruits the HATs CREBBP, TAF1/TFIID, EP300, PCAF and GCN5L2. Interacts with host KAT5/Tip60; this interaction targets the latter to degradation. Interacts with the host deacetylase SIRT1. Interacts with host capping enzyme RNGTT; this interaction stimulates RNGTT. Binds to host KDR, and to the host integrins ITGAV/ITGB3 and ITGA5/ITGB1. Interacts with host KPNB1/importin beta-1 without previous binding to KPNA1/importin alpha-1. Interacts with EIF2AK2. Interacts with host nucleosome assembly protein NAP1L1; this interaction may be required for the transport of Tat within the nucleus, since the two proteins interact at the nuclear rim. Interacts with host C1QBP/SF2P32; this interaction involves lysine-acetylated Tat. Interacts with the host chemokine receptors CCR2, CCR3 and CXCR4. Interacts with host DPP4/CD26; this interaction may trigger an anti-proliferative effect. Interacts with host LDLR. Interacts with the host extracellular matrix metalloproteinase MMP1. Interacts with host PRMT6; this interaction mediates Tat's methylation. Interacts with, and is ubiquitinated by MDM2/Hdm2. Interacts with host PSMC3 and HTATIP2. Interacts with STAB1; this interaction may overcome SATB1-mediated repression of IL2 and IL2RA (interleukin) in T cells by binding to the same domain than HDAC1. Interacts (when acetylated) with human CDK13, thereby increasing HIV-1 mRNA splicing and promoting the production of the doubly spliced HIV-1 protein Nef. Interacts with host TBP; this interaction modulates the activity of transcriptional pre-initiation complex. Interacts with host RELA. Interacts with host PLSCR1; this interaction negatively regulates Tat transactivation activity by altering its subcellular distribution. Post-translationally, asymmetrical arginine methylation by host PRMT6 seems to diminish the transactivation capacity of Tat and affects the interaction with host CCNT1. Acetylation by EP300, CREBBP, GCN5L2/GCN5 and PCAF regulates the transactivation activity of Tat. EP300-mediated acetylation of Lys-50 promotes dissociation of Tat from the TAR RNA through the competitive binding to PCAF's bromodomain. In addition, the non-acetylated Tat's N-terminus can also interact with PCAF. PCAF-mediated acetylation of Lys-28 enhances Tat's binding to CCNT1. Lys-50 is deacetylated by SIRT1. In terms of processing, polyubiquitination by host MDM2 does not target Tat to degradation, but activates its transactivation function and fosters interaction with CCNT1 and TAR RNA. Post-translationally, phosphorylated by EIF2AK2 on serine and threonine residues adjacent to the basic region important for TAR RNA binding and function. Phosphorylation of Tat by EIF2AK2 is dependent on the prior activation of EIF2AK2 by dsRNA.

The protein resides in the host nucleus. Its subcellular location is the host nucleolus. It is found in the host cytoplasm. The protein localises to the secreted. In terms of biological role, transcriptional activator that increases RNA Pol II processivity, thereby increasing the level of full-length viral transcripts. Recognizes a hairpin structure at the 5'-LTR of the nascent viral mRNAs referred to as the transactivation responsive RNA element (TAR) and recruits the cyclin T1-CDK9 complex (P-TEFb complex) that will in turn hyperphosphorylate the RNA polymerase II to allow efficient elongation. The CDK9 component of P-TEFb and other Tat-activated kinases hyperphosphorylate the C-terminus of RNA Pol II that becomes stabilized and much more processive. Other factors such as HTATSF1/Tat-SF1, SUPT5H/SPT5, and HTATIP2 are also important for Tat's function. Besides its effect on RNA Pol II processivity, Tat induces chromatin remodeling of proviral genes by recruiting the histone acetyltransferases (HATs) CREBBP, EP300 and PCAF to the chromatin. This also contributes to the increase in proviral transcription rate, especially when the provirus integrates in transcriptionally silent region of the host genome. To ensure maximal activation of the LTR, Tat mediates nuclear translocation of NF-kappa-B by interacting with host RELA. Through its interaction with host TBP, Tat may also modulate transcription initiation. Tat can reactivate a latently infected cell by penetrating in it and transactivating its LTR promoter. In the cytoplasm, Tat is thought to act as a translational activator of HIV-1 mRNAs. Its function is as follows. Extracellular circulating Tat can be endocytosed by surrounding uninfected cells via the binding to several surface receptors such as CD26, CXCR4, heparan sulfate proteoglycans (HSPG) or LDLR. Neurons are rarely infected, but they internalize Tat via their LDLR. Through its interaction with nuclear HATs, Tat is potentially able to control the acetylation-dependent cellular gene expression. Modulates the expression of many cellular genes involved in cell survival, proliferation or in coding for cytokines or cytokine receptors. Tat plays a role in T-cell and neurons apoptosis. Tat induced neurotoxicity and apoptosis probably contribute to neuroAIDS. Circulating Tat also acts as a chemokine-like and/or growth factor-like molecule that binds to specific receptors on the surface of the cells, affecting many cellular pathways. In the vascular system, Tat binds to ITGAV/ITGB3 and ITGA5/ITGB1 integrins dimers at the surface of endothelial cells and competes with bFGF for heparin-binding sites, leading to an excess of soluble bFGF. The polypeptide is Protein Tat (Homo sapiens (Human)).